Consider the following 601-residue polypeptide: ATP-dependent lipid A-core flippase (601 aa).

The ABC transmembrane type-1 domain occupies 28–328 (LLSVCGLIVY…LTRVNAEFQR (301 aa)). A run of 6 helical transmembrane segments spans residues 32 to 52 (CGLIVYGLVDAAFISFIGPFI), 81 to 101 (VLLMAPIVVILMFSLRGFANF), 160 to 180 (ALISIVRDGVTVIGMLGLMFY), 183 to 203 (WKLSLCILVIGPIMGLVITIV), 267 to 287 (AVSQPLIMVIGSFALAFVLYA), and 296 to 316 (DLTAGTFATILGAMMAMLQPI). The ABC transporter domain occupies 360–597 (LRFDNVSFSY…GGMYAKLYQM (238 aa)). 394–401 (GRSGSGKS) serves as a coordination point for ATP.

This sequence belongs to the ABC transporter superfamily. Lipid exporter (TC 3.A.1.106) family. As to quaternary structure, homodimer.

The protein localises to the cell inner membrane. It catalyses the reaction ATP + H2O + lipid A-core oligosaccharideSide 1 = ADP + phosphate + lipid A-core oligosaccharideSide 2.. In terms of biological role, involved in lipopolysaccharide (LPS) biosynthesis. Translocates lipid A-core from the inner to the outer leaflet of the inner membrane. Transmembrane domains (TMD) form a pore in the inner membrane and the ATP-binding domain (NBD) is responsible for energy generation. This Shewanella sp. (strain MR-4) protein is ATP-dependent lipid A-core flippase.